We begin with the raw amino-acid sequence, 287 residues long: Small ribosomal subunit biogenesis GTPase RsgA (287 aa).

One can recognise a CP-type G domain in the interval 61-218; the sequence is SSELIRPTVA…LVDTPGFTTL (158 aa). GTP-binding positions include 110–113 and 161–169; these read NKED and GPSGAGKST. Residues Cys242, Cys247, His249, and Cys255 each coordinate Zn(2+).

It belongs to the TRAFAC class YlqF/YawG GTPase family. RsgA subfamily. Monomer. Associates with 30S ribosomal subunit, binds 16S rRNA. Zn(2+) is required as a cofactor.

Its subcellular location is the cytoplasm. Functionally, one of several proteins that assist in the late maturation steps of the functional core of the 30S ribosomal subunit. Helps release RbfA from mature subunits. May play a role in the assembly of ribosomal proteins into the subunit. Circularly permuted GTPase that catalyzes slow GTP hydrolysis, GTPase activity is stimulated by the 30S ribosomal subunit. This chain is Small ribosomal subunit biogenesis GTPase RsgA, found in Clostridium perfringens (strain SM101 / Type A).